The following is a 25-amino-acid chain: Superoxide dismutase [Mn], mitochondrial (25 aa).

His-9 is a binding site for Mn(2+).

The protein belongs to the iron/manganese superoxide dismutase family. As to quaternary structure, homotetramer. Mn(2+) is required as a cofactor.

The protein localises to the mitochondrion matrix. It catalyses the reaction 2 superoxide + 2 H(+) = H2O2 + O2. Functionally, destroys superoxide anion radicals which are normally produced within the cells and which are toxic to biological systems. The polypeptide is Superoxide dismutase [Mn], mitochondrial (Alternaria alternata (Alternaria rot fungus)).